Consider the following 495-residue polypeptide: Trimethylamine methyltransferase MttB2 (495 aa).

Residue Pyl334 is a non-standard amino acid, pyrrolysine.

Belongs to the trimethylamine methyltransferase family. Can form a complex with MttC.

It catalyses the reaction Co(I)-[trimethylamine-specific corrinoid protein] + trimethylamine + H(+) = methyl-Co(III)-[trimethylamine-specific corrinoid protein] + dimethylamine. It participates in one-carbon metabolism; methanogenesis from trimethylamine. In terms of biological role, catalyzes the transfer of a methyl group from trimethylamine to the corrinoid cofactor of MttC. This Methanosarcina mazei (strain ATCC BAA-159 / DSM 3647 / Goe1 / Go1 / JCM 11833 / OCM 88) (Methanosarcina frisia) protein is Trimethylamine methyltransferase MttB2 (mttB2).